Consider the following 394-residue polypeptide: Tubby-like F-box protein 2 (394 aa).

The tract at residues 21–44 (SKRSWSKSSHIAPDQTTPPLDNIP) is disordered. Polar residues predominate over residues 26 to 44 (SKSSHIAPDQTTPPLDNIP). An F-box domain is found at 46-101 (SPWASLPPELLHDIIWRVEESETAWPARAAVVSCASVCKSWRGITMEIVRIPEQCG). 2 disordered regions span residues 200-225 (ASST…PTNS) and 268-297 (IEEE…PSLR).

It belongs to the TUB family. As to expression, ubiquitous.

The chain is Tubby-like F-box protein 2 from Arabidopsis thaliana (Mouse-ear cress).